A 344-amino-acid polypeptide reads, in one-letter code: uncharacterized protein (344 aa).

Residues K323–R332 are compositionally biased toward basic and acidic residues. The interval K323–R344 is disordered.

This is an uncharacterized protein from Bacillus anthracis.